The primary structure comprises 246 residues: Large ribosomal subunit protein uL30 (246 aa).

Belongs to the universal ribosomal protein uL30 family.

Functionally, binds to G-rich structures in 28S rRNA and in mRNAs. Plays a regulatory role in the translation apparatus; inhibits cell-free translation of mRNAs. The chain is Large ribosomal subunit protein uL30 (rpl7) from Dictyostelium discoideum (Social amoeba).